Reading from the N-terminus, the 350-residue chain is tRNA uridine(34) hydroxylase (350 aa).

Residues 146–240 (DDPDAVFIDM…YARRAREQGL (95 aa)) form the Rhodanese domain. The Cysteine persulfide intermediate role is filled by C200. Residues 319 to 328 (RRRRAGRENG) are compositionally biased toward basic and acidic residues. Positions 319 to 350 (RRRRAGRENGNKIFNKSRGRLNSKLSIPDPAE) are disordered.

Belongs to the TrhO family.

It catalyses the reaction uridine(34) in tRNA + AH2 + O2 = 5-hydroxyuridine(34) in tRNA + A + H2O. Functionally, catalyzes oxygen-dependent 5-hydroxyuridine (ho5U) modification at position 34 in tRNAs. In Salmonella dublin (strain CT_02021853), this protein is tRNA uridine(34) hydroxylase.